A 569-amino-acid polypeptide reads, in one-letter code: Ribonuclease J (569 aa).

Zn(2+) contacts are provided by H81, H83, D85, H86, H150, and D172. 373–377 is a substrate binding site; it reads HASGH. H399 contributes to the Zn(2+) binding site.

The protein belongs to the metallo-beta-lactamase superfamily. RNA-metabolizing metallo-beta-lactamase-like family. Bacterial RNase J subfamily. Homodimer, may be a subunit of the RNA degradosome. Zn(2+) is required as a cofactor.

It localises to the cytoplasm. An RNase that has 5'-3' exonuclease and possibly endoonuclease activity. Involved in maturation of rRNA and in some organisms also mRNA maturation and/or decay. This is Ribonuclease J from Mycoplasma genitalium (strain ATCC 33530 / DSM 19775 / NCTC 10195 / G37) (Mycoplasmoides genitalium).